A 474-amino-acid chain; its full sequence is Cysteine--tRNA ligase (474 aa).

C28 is a binding site for Zn(2+). Residues 30 to 40 (ITVYDLCHLGH) carry the 'HIGH' region motif. Zn(2+) contacts are provided by C209, H234, and E238. A 'KMSKS' region motif is present at residues 269 to 273 (KMSKS). Residue K272 coordinates ATP.

It belongs to the class-I aminoacyl-tRNA synthetase family. As to quaternary structure, monomer. Zn(2+) is required as a cofactor.

The protein resides in the cytoplasm. The catalysed reaction is tRNA(Cys) + L-cysteine + ATP = L-cysteinyl-tRNA(Cys) + AMP + diphosphate. The polypeptide is Cysteine--tRNA ligase (Blochmanniella floridana).